Consider the following 1035-residue polypeptide: Tyrosine-protein kinase-like otk (1035 aa).

A signal peptide spans 1–23 (MDMDVMMISMCILASTLMAPGWA). 5 Ig-like C2-type domains span residues 24–109 (STSG…REAS), 110–199 (PPAK…RVMS), 251–365 (PEDL…APLN), 368–464 (PGLL…VSIN), and 469–559 (PKFS…VQLV). Topologically, residues 24-582 (STSGFLRVPQ…GGDGFLVTRA (559 aa)) are extracellular. 5 disulfides stabilise this stretch: Cys-47/Cys-96, Cys-138/Cys-188, Cys-276/Cys-354, Cys-399/Cys-448, and Cys-491/Cys-543. N-linked (GlcNAc...) asparagine glycans are attached at residues Asn-336, Asn-418, Asn-430, Asn-445, Asn-513, and Asn-525. A helical transmembrane segment spans residues 583–603 (VLITMTVALAYIVLVVGLMLW). At 604–1035 (CRYRRQARKA…SKAMQSVAEK (432 aa)) the chain is on the cytoplasmic side. Disordered stretches follow at residues 623–683 (AGGD…KSVY) and 721–775 (AQSD…KEEE). The span at 658 to 676 (KSNGDAQKSDDTACSQQSR) shows a compositional bias: polar residues. Ser-681 is modified (phosphoserine). Residues 693–1029 (LSELLQIGRG…QLGSALSKAM (337 aa)) form the Protein kinase; inactive domain. Residues 723 to 734 (SDKDADTEKQHS) show a composition bias toward basic and acidic residues. Residues 766–775 (DDIEEIKEEE) show a composition bias toward acidic residues.

This sequence belongs to the protein kinase superfamily. Tyr protein kinase family. Insulin receptor subfamily. As to quaternary structure, interacts with plexA; component of a receptor complex that mediates the repulsive signaling in response to Semaphorin ligands.

It localises to the cell membrane. Functionally, acts as a calcium-dependent, homophilic cell adhesion molecule that regulates neural recognition during the development of the nervous system. Component of the repulsive Plexin signaling response to regulate motor axon guidance at the embryonic stage. Also component of a receptor complex that is required in the adult visual system to innervate the lamina layer; specific targeting of R1-R6 axons. The protein is Tyrosine-protein kinase-like otk of Drosophila persimilis (Fruit fly).